Reading from the N-terminus, the 297-residue chain is Acetylglutamate kinase (297 aa).

Residues 70–71 (GG), Arg-92, and Asn-194 each bind substrate.

It belongs to the acetylglutamate kinase family. ArgB subfamily.

It is found in the cytoplasm. It catalyses the reaction N-acetyl-L-glutamate + ATP = N-acetyl-L-glutamyl 5-phosphate + ADP. Its pathway is amino-acid biosynthesis; L-arginine biosynthesis; N(2)-acetyl-L-ornithine from L-glutamate: step 2/4. In terms of biological role, catalyzes the ATP-dependent phosphorylation of N-acetyl-L-glutamate. In Herminiimonas arsenicoxydans, this protein is Acetylglutamate kinase.